Consider the following 381-residue polypeptide: Cytochrome b (381 aa).

The next 4 membrane-spanning stretches (helical) occupy residues 34-54 (FGSL…FLAM), 78-99 (WLIR…YLHI), 114-134 (WNIG…GYVL), and 179-199 (FFAF…IHLL). Residues His-84 and His-98 each coordinate heme b. 2 residues coordinate heme b: His-183 and His-197. His-202 provides a ligand contact to a ubiquinone. 4 consecutive transmembrane segments (helical) span residues 227–247 (YKDI…TLFI), 289–309 (LGGV…PLLQ), 321–341 (MTQI…WIGG), and 348–368 (FIMV…IIIP).

This sequence belongs to the cytochrome b family. As to quaternary structure, the cytochrome bc1 complex contains 3 respiratory subunits (MT-CYB, CYC1 and UQCRFS1), 2 core proteins (UQCRC1 and UQCRC2) and probably 6 low-molecular weight proteins. It depends on heme b as a cofactor.

It is found in the mitochondrion inner membrane. Component of the ubiquinol-cytochrome c reductase complex (complex III or cytochrome b-c1 complex) that is part of the mitochondrial respiratory chain. The b-c1 complex mediates electron transfer from ubiquinol to cytochrome c. Contributes to the generation of a proton gradient across the mitochondrial membrane that is then used for ATP synthesis. The sequence is that of Cytochrome b (mt-cyb) from Galeocerdo cuvier (Tiger shark).